A 447-amino-acid polypeptide reads, in one-letter code: UPF0210 protein LCK_00974 (447 aa).

The protein belongs to the UPF0210 family. In terms of assembly, homodimer.

The protein is UPF0210 protein LCK_00974 of Leuconostoc citreum (strain KM20).